Consider the following 426-residue polypeptide: Transcriptional enhancer factor TEF-1 (426 aa).

Residue Met1 is modified to N-acetylmethionine. Over residues 1-12 the composition is skewed to polar residues; sequence MEPSSWSGSESP. The interval 1–31 is disordered; sequence MEPSSWSGSESPAENMERMSDSADKPIDNDA. Ser11 is subject to Phosphoserine. Over residues 15 to 28 the composition is skewed to basic and acidic residues; sequence NMERMSDSADKPID. Residues 28 to 104 constitute a DNA-binding region (TEA); sequence DNDAEGVWSP…QVLARRKSRD (77 aa). The residue at position 108 (Lys108) is an N6-lactoyllysine. A transcriptional activation region spans residues 167-426; the sequence is GSSQDVKPFV…QHHIYRLVKD (260 aa).

As to quaternary structure, interacts with YAP1 and WWTR1/TAZ. In terms of processing, lactylation by AARS1 promotes nuclear localization and stabilization of YAP1, leading to increased Hippo signaling pathway. Delactylated by SIRT1. As to expression, preferentially expressed in skeletal muscle. Lower levels in pancreas, placenta, and heart.

The protein localises to the nucleus. In terms of biological role, transcription factor which plays a key role in the Hippo signaling pathway, a pathway involved in organ size control and tumor suppression by restricting proliferation and promoting apoptosis. The core of this pathway is composed of a kinase cascade wherein MST1/MST2, in complex with its regulatory protein SAV1, phosphorylates and activates LATS1/2 in complex with its regulatory protein MOB1, which in turn phosphorylates and inactivates YAP1 oncoprotein and WWTR1/TAZ. Acts by mediating gene expression of YAP1 and WWTR1/TAZ, thereby regulating cell proliferation, migration and epithelial mesenchymal transition (EMT) induction. Binds specifically and cooperatively to the SPH and GT-IIC 'enhansons' (5'-GTGGAATGT-3') and activates transcription in vivo in a cell-specific manner. The activation function appears to be mediated by a limiting cell-specific transcriptional intermediary factor (TIF). Involved in cardiac development. Binds to the M-CAT motif. The polypeptide is Transcriptional enhancer factor TEF-1 (TEAD1) (Homo sapiens (Human)).